Here is a 162-residue protein sequence, read N- to C-terminus: Protein NrdI (162 aa).

The protein belongs to the NrdI family.

Its function is as follows. Probably involved in ribonucleotide reductase function. The protein is Protein NrdI of Streptococcus pyogenes serotype M2 (strain MGAS10270).